A 127-amino-acid chain; its full sequence is MKAIYALLAVVALALVAVSLFSQSDSMEGWYSYQEGKKLSEEQKKEMFVFIGTSECGVCKRFKEFFRSNQSAMEFIRKNYIPVYVDAMREKTPVRVTFVPVFCTGFDGNLSCFSTAFPEELMMLLEK.

The N-terminal stretch at 1–26 (MKAIYALLAVVALALVAVSLFSQSDS) is a signal peptide.

This is an uncharacterized protein from Archaeoglobus fulgidus (strain ATCC 49558 / DSM 4304 / JCM 9628 / NBRC 100126 / VC-16).